The following is a 947-amino-acid chain: Beta-glucosidase (947 aa).

The active site involves D696.

The protein belongs to the glycosyl hydrolase 3 family.

It carries out the reaction Hydrolysis of terminal, non-reducing beta-D-glucosyl residues with release of beta-D-glucose.. It participates in glycan metabolism; cellulose degradation. The sequence is that of Beta-glucosidase from Ruminococcus albus.